A 502-amino-acid chain; its full sequence is Probable RNA exonuclease C9B6.11c (502 aa).

The segment at 338–379 is disordered; sequence SELEEKNASTKTENDSNEDDKEECQSSSTSSVPESTASTPKK. The span at 341-351 shows a compositional bias: basic and acidic residues; that stretch reads EEKNASTKTEN. Residues 363-376 are compositionally biased toward low complexity; it reads SSSTSSVPESTAST.

It belongs to the CCR4/nocturin family.

Its subcellular location is the cytoplasm. The protein localises to the nucleus. The chain is Probable RNA exonuclease C9B6.11c from Schizosaccharomyces pombe (strain 972 / ATCC 24843) (Fission yeast).